A 56-amino-acid polypeptide reads, in one-letter code: Large ribosomal subunit protein bL32A (56 aa).

A disordered region spans residues 1-56 (MAVPARRTSKAKKNKRRTHKGLTAPGLSRDSETGEYRMSHRISPDGTYKGRTIIEK). Over residues 7-20 (RTSKAKKNKRRTHK) the composition is skewed to basic residues. Basic and acidic residues predominate over residues 29–38 (RDSETGEYRM).

This sequence belongs to the bacterial ribosomal protein bL32 family.

This Listeria innocua serovar 6a (strain ATCC BAA-680 / CLIP 11262) protein is Large ribosomal subunit protein bL32A (rpmF1).